The primary structure comprises 294 residues: MSEQRRATTHLIGGFSGGLVSAIILQPFDLLKTRLQQDKTSTLWKTLKSIETPSQLWRGALPSCIRTSVGSAMYLTMLNSIRQAISKGKNTGSTGSSYLPQLNMYENMFSGAVTRALTGLITMPITVIKVRYESTLYQYTSLRYATSHIFRTEGLRGFFRGFGATALRDAPYAGLYMLFYDRMKVLVPTLLPSNVVKLNSDNRYSTYASTLINGSSAFSAAVIATSITAPFDTVKTRMQLEPAKFHSFTSTFWHIATKESVRNLFAGISLRLTRKAFSAGIAWGIYEEIVKKFV.

Solcar repeat units follow at residues R5–A84, L102–L186, and A208–K292. 6 helical membrane-spanning segments follow: residues L11–Q36, G59–I85, M108–E133, G161–K184, I212–M238, and G267–I285.

It belongs to the mitochondrial carrier (TC 2.A.29) family. SLC25A38 subfamily.

Its subcellular location is the mitochondrion inner membrane. It catalyses the reaction glycine(in) = glycine(out). In terms of biological role, mitochondrial glycine transporter that imports glycine into the mitochondrial matrix. Plays an important role in providing glycine for the first enzymatic step in heme biosynthesis, the condensation of glycine with succinyl-CoA to produce 5-aminolevulinate (ALA) in the mitochondrial matrix. In Kluyveromyces lactis (strain ATCC 8585 / CBS 2359 / DSM 70799 / NBRC 1267 / NRRL Y-1140 / WM37) (Yeast), this protein is Mitochondrial glycine transporter.